We begin with the raw amino-acid sequence, 434 residues long: KH domain-containing protein 3 (434 aa).

The interval 1–39 (MATLKTFRTLVQLKHKLGKAYEIVGEPRLPKWFHVEYLE) is involved in RNA binding. The 79-residue stretch at 40 to 118 (DPKKMYVEPT…CRMKLMEKEA (79 aa)) folds into the KH; atypical domain. 2 positions are modified to phosphothreonine: T267 and T279. Positions 334 to 434 (VREAATQQTP…RAVWEPFVML (101 aa)) are required for interaction with NUMA1 and regulation of apoptosis in response to DNA damage.

Belongs to the KHDC1 family. Component of the subcortical maternal complex (SCMC), at least composed of NLRP5, KHDC3, OOEP, and TLE6. Within the complex, interacts with NLRP5, KHDC3 and TLE6. The SCMC may facilitate translocation of its components between the nuclear and cytoplasmic compartments. Forms a scaffold complex with OOEP/FLOPED, and interacts with BLM and TRIM25 at DNA replication forks. Interacts with PARP1; the interaction is increased following the formation of DNA double-strand breaks. Interacts (via C-terminus) with NUMA1.

It localises to the cytoplasm. The protein localises to the cell cortex. The protein resides in the nucleus. It is found in the mitochondrion. Its subcellular location is the cytoskeleton. It localises to the microtubule organizing center. The protein localises to the centrosome. The protein resides in the chromosome. In terms of biological role, component of the subcortical maternal complex (SCMC), a multiprotein complex that plays a key role in early embryonic development. The SCMC complex is a structural constituent of cytoplasmic lattices, which consist in fibrous structures found in the cytoplasm of oocytes and preimplantation embryos. They are required to store maternal proteins critical for embryonic development, such as proteins that control epigenetic reprogramming of the preimplantation embryo, and prevent their degradation or activation. KHDC3 ensures proper spindle assembly by regulating the localization of AURKA via RHOA signaling and of PLK1 via a RHOA-independent process. Required for the localization of MAD2L1 to kinetochores to enable spindle assembly checkpoint function. As part of the OOEP-KHDC3 scaffold, recruits BLM and TRIM25 to DNA replication forks, thereby promoting the ubiquitination of BLM by TRIM25, enhancing BLM retainment at replication forks and therefore promoting stalled replication fork restart. Regulates homologous recombination-mediated DNA repair via recruitment of RAD51 to sites of DNA double-strand breaks, and sustainment of PARP1 activity, which in turn modulates downstream ATM or ATR activation. Activation of ATM or ATR in response to DNA double-strand breaks may be cell-type specific. Its role in DNA double-strand break repair is independent of its role in restarting stalled replication forks. Promotes neural stem cell neurogenesis and neuronal differentiation in the hippocampus. May regulate normal development of learning, memory and anxiety. Capable of binding RNA. The polypeptide is KH domain-containing protein 3 (Rattus norvegicus (Rat)).